Consider the following 255-residue polypeptide: MIQVTLIQIDNYGPWTVTPGPRAEPDLQTLQSRLYGDLEREFGAHGAIVFFNRFDNLIAISNGMDYDDHLLIQQSIRNRYPITISMGVGTADTAYEAQKIATKMIQNGGGAQSANRCEVLNIDSLADDDNSLVQIAHIDINDITNTLTDIETAFDTSIKVYEVLLALMDELAKIGGMCFFIGGDNYMAPTNGISKDQLREALKVVDKKTGVTLKAGIGVAKQAGRAADLADIGLEDIRAELVDDSVLLFNDLDEY.

This sequence belongs to the archaeal-type GTP cyclohydrolase family.

It catalyses the reaction GTP + 3 H2O = 2-amino-5-formylamino-6-(5-phospho-D-ribosylamino)pyrimidin-4(3H)-one + 2 phosphate + 2 H(+). Functionally, catalyzes the formation of 2-amino-5-formylamino-6-ribofuranosylamino-4(3H)-pyrimidinone ribonucleotide monophosphate and inorganic phosphate from GTP. Also has an independent pyrophosphate phosphohydrolase activity. This is GTP cyclohydrolase III from Methanosphaera stadtmanae (strain ATCC 43021 / DSM 3091 / JCM 11832 / MCB-3).